A 456-amino-acid chain; its full sequence is Bifunctional protein GlmU (456 aa).

A pyrophosphorylase region spans residues 1 to 227; it reads MKLRVVILAA…AQEVEGANNR (227 aa). UDP-N-acetyl-alpha-D-glucosamine-binding positions include 8–11, Lys22, Gln73, 78–79, 100–102, Gly137, Glu152, Asn167, and Asn225; these read LAAG, GT, and YGD. Asp102 is a binding site for Mg(2+). Asn225 is a Mg(2+) binding site. Residues 228-248 are linker; that stretch reads QQLASLERALQQRQAEELMTQ. Residues 249 to 456 form an N-acetyltransferase region; it reads GVTLIDPARF…WQRPQSKKGT (208 aa). Arg331 and Lys349 together coordinate UDP-N-acetyl-alpha-D-glucosamine. The Proton acceptor role is filled by His361. Residues Tyr364 and Asn375 each contribute to the UDP-N-acetyl-alpha-D-glucosamine site. Acetyl-CoA contacts are provided by residues Ala378, 384-385, Ser403, Ala421, and Arg438; that span reads NY.

The protein in the N-terminal section; belongs to the N-acetylglucosamine-1-phosphate uridyltransferase family. In the C-terminal section; belongs to the transferase hexapeptide repeat family. As to quaternary structure, homotrimer. It depends on Mg(2+) as a cofactor.

It is found in the cytoplasm. It catalyses the reaction alpha-D-glucosamine 1-phosphate + acetyl-CoA = N-acetyl-alpha-D-glucosamine 1-phosphate + CoA + H(+). The catalysed reaction is N-acetyl-alpha-D-glucosamine 1-phosphate + UTP + H(+) = UDP-N-acetyl-alpha-D-glucosamine + diphosphate. Its pathway is nucleotide-sugar biosynthesis; UDP-N-acetyl-alpha-D-glucosamine biosynthesis; N-acetyl-alpha-D-glucosamine 1-phosphate from alpha-D-glucosamine 6-phosphate (route II): step 2/2. The protein operates within nucleotide-sugar biosynthesis; UDP-N-acetyl-alpha-D-glucosamine biosynthesis; UDP-N-acetyl-alpha-D-glucosamine from N-acetyl-alpha-D-glucosamine 1-phosphate: step 1/1. It functions in the pathway bacterial outer membrane biogenesis; LPS lipid A biosynthesis. Its function is as follows. Catalyzes the last two sequential reactions in the de novo biosynthetic pathway for UDP-N-acetylglucosamine (UDP-GlcNAc). The C-terminal domain catalyzes the transfer of acetyl group from acetyl coenzyme A to glucosamine-1-phosphate (GlcN-1-P) to produce N-acetylglucosamine-1-phosphate (GlcNAc-1-P), which is converted into UDP-GlcNAc by the transfer of uridine 5-monophosphate (from uridine 5-triphosphate), a reaction catalyzed by the N-terminal domain. The polypeptide is Bifunctional protein GlmU (Idiomarina loihiensis (strain ATCC BAA-735 / DSM 15497 / L2-TR)).